A 118-amino-acid chain; its full sequence is Large ribosomal subunit protein bL19 (118 aa).

This sequence belongs to the bacterial ribosomal protein bL19 family.

This protein is located at the 30S-50S ribosomal subunit interface and may play a role in the structure and function of the aminoacyl-tRNA binding site. The polypeptide is Large ribosomal subunit protein bL19 (Salinibacter ruber (strain DSM 13855 / M31)).